A 916-amino-acid polypeptide reads, in one-letter code: Nitrate reductase [NADH] 1 (916 aa).

Residues 1–77 (MAASVQPRQF…DDEEEEQEDW (77 aa)) are disordered. Residues 66-76 (GSDDEEEEQED) are compositionally biased toward acidic residues. C192 contributes to the Mo-molybdopterin binding site. The Cytochrome b5 heme-binding domain occupies 541–616 (GKQFTMSEVR…LDTYRIGELI (76 aa)). Residues H576 and H599 each contribute to the heme site. Residues 656–768 (RDKVPCQLVD…KGPLGHVEYT (113 aa)) form the FAD-binding FR-type domain. Residues 708–711 (RAYT), 725–729 (LIKVY), F730, F737, 742–744 (LMT), S792, and T795 contribute to the FAD site.

This sequence belongs to the nitrate reductase family. As to quaternary structure, homodimer. FAD is required as a cofactor. The cofactor is heme. Requires Mo-molybdopterin as cofactor.

The catalysed reaction is nitrite + NAD(+) + H2O = nitrate + NADH + H(+). Functionally, nitrate reductase is a key enzyme involved in the first step of nitrate assimilation in plants, fungi and bacteria. The sequence is that of Nitrate reductase [NADH] 1 (NIA1) from Oryza sativa subsp. japonica (Rice).